Here is a 766-residue protein sequence, read N- to C-terminus: BMP/retinoic acid-inducible neural-specific protein 3 (766 aa).

The N-terminal stretch at 1–33 is a signal peptide; it reads MIWRRRAGAELSSLMALWEWIVLSLHCWVLAVA. Residues 74–264 enclose the MACPF domain; the sequence is RYKIYREFGR…FVQAALSYIA (191 aa). N168, N337, N456, N562, N609, and N641 each carry an N-linked (GlcNAc...) asparagine glycan.

The protein belongs to the BRINP family. Expressed in the brain. Weakly expressed in embryonic stem (ES) cells. Expressed in ES-derived neural stem cells (NSCs) and neuronal cells.

The protein resides in the secreted. Its subcellular location is the mitochondrion. Inhibits neuronal cell proliferation by negative regulation of the cell cycle transition. Promotes pituitary gonadotrope cell proliferation, migration and invasion, when overexpressed. May play a role in cell pituitary tumor development. The polypeptide is BMP/retinoic acid-inducible neural-specific protein 3 (Brinp3) (Mus musculus (Mouse)).